We begin with the raw amino-acid sequence, 329 residues long: Probable tyrosine--tRNA ligase, cytoplasmic (329 aa).

Position 35 (Tyr35) interacts with L-tyrosine. Positions Thr40 to Tyr48 match the 'HIGH' region motif. Positions 162, 166, 169, and 184 each coordinate L-tyrosine. The 'KMSKS' region motif lies at Lys218–Ser222.

It belongs to the class-I aminoacyl-tRNA synthetase family. As to quaternary structure, homodimer.

The protein localises to the cytoplasm. It catalyses the reaction tRNA(Tyr) + L-tyrosine + ATP = L-tyrosyl-tRNA(Tyr) + AMP + diphosphate + H(+). The sequence is that of Probable tyrosine--tRNA ligase, cytoplasmic from Vairimorpha ceranae (strain BRL01) (Microsporidian parasite).